A 264-amino-acid polypeptide reads, in one-letter code: ATP synthase subunit b 1 (264 aa).

Residues 2–22 traverse the membrane as a helical segment; it reads LFDWFTFWAQLLNFLILVWLL. The disordered stretch occupies residues 240 to 264; sequence ASSALLDGPDDEMNEEEGHAGKDAD. Residues 255–264 show a composition bias toward basic and acidic residues; that stretch reads EEGHAGKDAD.

Belongs to the ATPase B chain family. As to quaternary structure, F-type ATPases have 2 components, F(1) - the catalytic core - and F(0) - the membrane proton channel. F(1) has five subunits: alpha(3), beta(3), gamma(1), delta(1), epsilon(1). F(0) has four main subunits: a(1), b(2) and c(10-14). The alpha and beta chains form an alternating ring which encloses part of the gamma chain. F(1) is attached to F(0) by a central stalk formed by the gamma and epsilon chains, while a peripheral stalk is formed by the delta and b chains.

The protein localises to the cell inner membrane. F(1)F(0) ATP synthase produces ATP from ADP in the presence of a proton or sodium gradient. F-type ATPases consist of two structural domains, F(1) containing the extramembraneous catalytic core and F(0) containing the membrane proton channel, linked together by a central stalk and a peripheral stalk. During catalysis, ATP synthesis in the catalytic domain of F(1) is coupled via a rotary mechanism of the central stalk subunits to proton translocation. Its function is as follows. Component of the F(0) channel, it forms part of the peripheral stalk, linking F(1) to F(0). The chain is ATP synthase subunit b 1 from Chlorobium luteolum (strain DSM 273 / BCRC 81028 / 2530) (Pelodictyon luteolum).